Consider the following 209-residue polypeptide: dTTP/UTP pyrophosphatase (209 aa).

Asp88 acts as the Proton acceptor in catalysis.

The protein belongs to the Maf family. YhdE subfamily. The cofactor is a divalent metal cation.

It is found in the cytoplasm. The catalysed reaction is dTTP + H2O = dTMP + diphosphate + H(+). It catalyses the reaction UTP + H2O = UMP + diphosphate + H(+). Nucleoside triphosphate pyrophosphatase that hydrolyzes dTTP and UTP. May have a dual role in cell division arrest and in preventing the incorporation of modified nucleotides into cellular nucleic acids. In Burkholderia mallei (strain ATCC 23344), this protein is dTTP/UTP pyrophosphatase.